We begin with the raw amino-acid sequence, 1420 residues long: DNA-directed RNA polymerase subunit beta' (1420 aa).

C71, C73, C86, and C89 together coordinate Zn(2+). Residues D461, D463, and D465 each contribute to the Mg(2+) site. Residues C815, C889, C896, and C899 each contribute to the Zn(2+) site.

It belongs to the RNA polymerase beta' chain family. As to quaternary structure, the RNAP catalytic core consists of 2 alpha, 1 beta, 1 beta' and 1 omega subunit. When a sigma factor is associated with the core the holoenzyme is formed, which can initiate transcription. It depends on Mg(2+) as a cofactor. Zn(2+) is required as a cofactor.

The catalysed reaction is RNA(n) + a ribonucleoside 5'-triphosphate = RNA(n+1) + diphosphate. In terms of biological role, DNA-dependent RNA polymerase catalyzes the transcription of DNA into RNA using the four ribonucleoside triphosphates as substrates. In Haemophilus ducreyi (strain 35000HP / ATCC 700724), this protein is DNA-directed RNA polymerase subunit beta'.